The chain runs to 180 residues: Ribosome maturation factor RimM (180 aa).

Residues 108 to 180 (PDEYYWVDLE…LIVVDWDPDF (73 aa)) form the PRC barrel domain.

This sequence belongs to the RimM family. As to quaternary structure, binds ribosomal protein uS19.

Its subcellular location is the cytoplasm. An accessory protein needed during the final step in the assembly of 30S ribosomal subunit, possibly for assembly of the head region. Essential for efficient processing of 16S rRNA. May be needed both before and after RbfA during the maturation of 16S rRNA. It has affinity for free ribosomal 30S subunits but not for 70S ribosomes. This Xanthomonas euvesicatoria pv. vesicatoria (strain 85-10) (Xanthomonas campestris pv. vesicatoria) protein is Ribosome maturation factor RimM.